Reading from the N-terminus, the 113-residue chain is MELPPNVQNQLMQFQQLQQQLQMIMYQKQQFETQLKEMEKAVEEMEKSTSDEVFKMAGGILVKRNKDEVKEELSEKMETMKLRVATFEKQEEKMQKRYAELQENLQKVIGQGH.

The protein belongs to the prefoldin subunit beta family. Heterohexamer of two alpha and four beta subunits.

The protein resides in the cytoplasm. Functionally, molecular chaperone capable of stabilizing a range of proteins. Seems to fulfill an ATP-independent, HSP70-like function in archaeal de novo protein folding. This is Prefoldin subunit beta from Methanococcus vannielii (strain ATCC 35089 / DSM 1224 / JCM 13029 / OCM 148 / SB).